A 288-amino-acid chain; its full sequence is Energy-coupling factor transporter ATP-binding protein EcfA3 (288 aa).

In terms of domain architecture, ABC transporter spans 3–245 (INFRNVSFSY…ESYLRKEKLR (243 aa)). 40 to 47 (GHTGSGKS) provides a ligand contact to ATP.

The protein belongs to the ABC transporter superfamily. Energy-coupling factor EcfA family. In terms of assembly, forms a stable energy-coupling factor (ECF) transporter complex composed of 2 membrane-embedded substrate-binding proteins (S component), 2 ATP-binding proteins (A component) and 2 transmembrane proteins (T component).

Its subcellular location is the cell membrane. In terms of biological role, ATP-binding (A) component of a common energy-coupling factor (ECF) ABC-transporter complex. Unlike classic ABC transporters this ECF transporter provides the energy necessary to transport a number of different substrates. This Oenococcus oeni (strain ATCC BAA-331 / PSU-1) protein is Energy-coupling factor transporter ATP-binding protein EcfA3.